The chain runs to 558 residues: ATP synthase subunit alpha (558 aa).

172–179 contacts ATP; it reads GDRKTGKT. The segment at 536 to 558 is disordered; the sequence is ESVKVHQAIPAKTSEKSKNSTPR. The segment covering 548 to 558 has biased composition (basic and acidic residues); the sequence is TSEKSKNSTPR.

This sequence belongs to the ATPase alpha/beta chains family. In terms of assembly, F-type ATPases have 2 components, CF(1) - the catalytic core - and CF(0) - the membrane proton channel. CF(1) has five subunits: alpha(3), beta(3), gamma(1), delta(1), epsilon(1). CF(0) has three main subunits: a(1), b(2) and c(9-12). The alpha and beta chains form an alternating ring which encloses part of the gamma chain. CF(1) is attached to CF(0) by a central stalk formed by the gamma and epsilon chains, while a peripheral stalk is formed by the delta and b chains.

The protein localises to the cell membrane. The catalysed reaction is ATP + H2O + 4 H(+)(in) = ADP + phosphate + 5 H(+)(out). Produces ATP from ADP in the presence of a proton gradient across the membrane. The alpha chain is a regulatory subunit. This chain is ATP synthase subunit alpha, found in Mycobacterium leprae (strain Br4923).